We begin with the raw amino-acid sequence, 300 residues long: Probable membrane transporter protein YtnM (300 aa).

The next 8 membrane-spanning stretches (helical) occupy residues 4 to 24 (LIVF…LGMA), 33 to 53 (LLAF…AEVV), 76 to 96 (LVIP…QLPG), 102 to 122 (YISL…LFQY), 139 to 159 (IPLG…WGPV), 206 to 226 (LWVF…AWLV), 231 to 251 (PQLM…RTLI), and 260 to 280 (VHPL…LFVL).

This sequence belongs to the 4-toluene sulfonate uptake permease (TSUP) (TC 2.A.102) family.

Its subcellular location is the cell membrane. The polypeptide is Probable membrane transporter protein YtnM (ytnM) (Bacillus subtilis (strain 168)).